The following is a 307-amino-acid chain: Putative serine/threonine-protein phosphatase C22H10.04 (307 aa).

Mn(2+)-binding residues include Asp51, His53, Asp79, and Asn111. The active-site Proton donor is His112. 2 residues coordinate Mn(2+): His161 and His236.

This sequence belongs to the PPP phosphatase family. PP-X subfamily. Mn(2+) is required as a cofactor.

The catalysed reaction is O-phospho-L-seryl-[protein] + H2O = L-seryl-[protein] + phosphate. It catalyses the reaction O-phospho-L-threonyl-[protein] + H2O = L-threonyl-[protein] + phosphate. The sequence is that of Putative serine/threonine-protein phosphatase C22H10.04 from Schizosaccharomyces pombe (strain 972 / ATCC 24843) (Fission yeast).